The following is a 1040-amino-acid chain: MQVLPPSSTGGPSRLFIMRPVATTLLMVAILIAGIIGYRFLPVSALPEVDYPTIQVITLYPGASPDVVTSAITAPLERQFGQMSGLKQMSSQSSGGASVVTLQFQLTLPLDVAEQEVQAAINAATNLLPSDLPNPPVYSKVNPADPPIMTLAVTSSAMPMTQVEDMVETRVAQKISQVSGVGLVTLSGGQRPAVRVKLNAQAIAALGLTSETIRTAIVSANVNSAKGSLDGPTRAVTLSANDQMQSADEYRQLIVAYQNGAPIRLGDVATVEQGAENRWLGAWANKEQAIVMNVQRQPGANIIDTADSIRAMLPQLIESLPKSVNVKVLSDRTTNIRASVSDTQFELMLAMALVVMIIYVFLRNVPATIIPAVAVPLSLVGTFAVMVFLDFSINNLTLMALTIATGFVVDDAIVVIENISRYIEKGEKPLAAALKGAGEIGFTIISLTFSLIAVLIPLLFMGDIVGRLFREFAVTLAVAILISAVVSLTLTPMMCARMLSAESLRKQNRFSRASERMFERIIAAYGRMLEKVLNHPWATLSVALGTLALSVMLWIVIPKGFFPIQDNGIIQGTLQAPQSVSFASMAQRQQAVSDVIMKDPAVESLTSFVGVDGTNPSLNSARLQINLKPLDDRDDRVNTVIERLQSAVAKVPGVELYLQPTQDLTIDTTVSRTQYQFTLQATSLEALSTWVPQLVTKLQELPQLSDVSSDWQDKGLAAYVNVNRDTASRLGISMADVDNALYNAFGQRLISTIYTQANQYRVVLEHNTEQTPGLTALDTVRLTSKNGGIVPLSAIATVEQRFAPLSINHLDQFPSTTISFNVPDNYSLGEAVESILNAEKTLNFPTDIQTQFQGSTLAFQAALGNTIWLIVAAVVAMYIVLGVLYESFIHPVTILSTLPTAGVGALLALMLSGSELDVIAIIGIILLIGIVKKNAIMMIDFALAAEREQGMAPRDAIFQACLLRFRPILMTTMAALLGALPLMLSTGVGAELRRPLGIGMVGGLLVSQVLTLFTTPVIYLLFDTLALKMKARFPKREEEA.

A run of 12 helical transmembrane segments spans residues 16–36, 342–362, 369–389, 396–416, 440–460, 472–492, 537–557, 869–889, 890–910, 911–931, 968–988, and 998–1018; these read FIMRPVATTLLMVAILIAGII, DTQFELMLAMALVVMIIYVFL, IIPAVAVPLSLVGTFAVMVFL, LTLMALTIATGFVVDDAIVVI, IGFTIISLTFSLIAVLIPLLF, FAVTLAVAILISAVVSLTLTP, WATLSVALGTLALSVMLWIVI, LIVAAVVAMYIVLGVLYESFI, HPVTILSTLPTAGVGALLALM, LSGSELDVIAIIGIILLIGIV, ILMTTMAALLGALPLMLSTGV, and IGMVGGLLVSQVLTLFTTPVI.

Belongs to the resistance-nodulation-cell division (RND) (TC 2.A.6) family. MdtB subfamily. In terms of assembly, part of a tripartite efflux system composed of MdtA, MdtB and MdtC. MdtB forms a heteromultimer with MdtC.

The protein localises to the cell inner membrane. This Enterobacter sp. (strain 638) protein is Multidrug resistance protein MdtB.